We begin with the raw amino-acid sequence, 272 residues long: MKRTAFFISDGTGITAETLGQSLLAQFESIPFNKFTRPYIDSPDKARAMVQQINAAAERDGVRPIIFDTIVNQDIREILATSNGFMIDIFSSFLSPLEQELIAHSSYSVGKSHSIGGNSNYMERIEAVNFALDNDDGARTHYYDKADLILVGVSRCGKTPTCLYMAMQFGIRAANYPLTEDDMERLQLPAVLKKHHSKLFGLTIDPDRLTAIRHERKPNSRYSSFAQCEFEVREVESLFRRENIPNINSTHFSVEEISAKILVEKGVERRFK.

Residue glycine 152–threonine 159 participates in ADP binding.

Belongs to the pyruvate, phosphate/water dikinase regulatory protein family. PSRP subfamily.

It carries out the reaction [pyruvate, water dikinase] + ADP = [pyruvate, water dikinase]-phosphate + AMP + H(+). The enzyme catalyses [pyruvate, water dikinase]-phosphate + phosphate + H(+) = [pyruvate, water dikinase] + diphosphate. Functionally, bifunctional serine/threonine kinase and phosphorylase involved in the regulation of the phosphoenolpyruvate synthase (PEPS) by catalyzing its phosphorylation/dephosphorylation. This Pseudomonas putida (strain ATCC 700007 / DSM 6899 / JCM 31910 / BCRC 17059 / LMG 24140 / F1) protein is Putative phosphoenolpyruvate synthase regulatory protein.